Reading from the N-terminus, the 527-residue chain is Abrin-b (527 aa).

Gln1 carries the pyrrolidone carboxylic acid modification. Asn110 carries an N-linked (GlcNAc...) asparagine glycan. Glu163 is an active-site residue. Cystine bridges form between Cys246–Cys268, Cys285–Cys304, and Cys328–Cys345. The region spanning 272-399 (YEPTVRIGGR…YLMRQGWRTG (128 aa)) is the Ricin B-type lectin 1 domain. The stretch at 282 to 324 (NGMCVDVYDDGYHNGNRIIAWKCKDRLEENQLWTLKSDKTIRS) is one 1-alpha repeat. The stretch at 325–365 (NGKCLTTEGYAPGNYVMIYDCTSAVAEATYWEIWDNGTIIN) is one 1-beta repeat. 2 N-linked (GlcNAc...) asparagine glycosylation sites follow: Asn360 and Asn400. The 1-gamma repeat unit spans residues 368-400 (SALVLSAESSSMGGTLTVQTNEYLMRQGWRTGN). The 125-residue stretch at 402–526 (TSPFVTSISG…GKPNQIWLTL (125 aa)) folds into the Ricin B-type lectin 2 domain. The 2-alpha repeat unit spans residues 413 to 448 (SDLCMQAQGSNVWLAYCDNNKKEQQWALYTDGSIRS). Cystine bridges form between Cys416-Cys429 and Cys455-Cys472. One copy of the 2-beta repeat lies at 452 to 491 (TNNCLTSKDHKQGSPIVLMACSNGWASQRWLFRNDGSIYN). A 2-gamma repeat occupies 494-527 (DDMVMDVKRSDPSLKEIILHPYHGKPNQIWLTLF).

The protein in the N-terminal section; belongs to the ribosome-inactivating protein family. Type 2 RIP subfamily. Disulfide-linked dimer of A and B chains.

It carries out the reaction Endohydrolysis of the N-glycosidic bond at one specific adenosine on the 28S rRNA.. In terms of biological role, the A chain is responsible for inhibiting protein synthesis through the catalytic inactivation of 60S ribosomal subunits by removing adenine from position 4,324 of 28S rRNA. Abrin-a is more toxic than ricin. Functionally, the B chain is a galactose-specific lectin that facilitates the binding of abrin to the cell membrane that precedes endocytosis. In Abrus precatorius (Indian licorice), this protein is Abrin-b.